Consider the following 166-residue polypeptide: Cytochrome P450 regulator dap1 (166 aa).

Residues 4-21 traverse the membrane as a helical segment; it reads TQVVFIVTLFLYLLITRW. The Cytochrome b5 heme-binding domain occupies 42–145; that stretch reads DYTPAELKEY…QKYQAVGRLI (104 aa). Serine 108 carries the post-translational modification Phosphoserine. Residue tyrosine 138 participates in heme binding.

It belongs to the cytochrome b5 family. MAPR subfamily. Interacts with erg5 and erg11.

Its subcellular location is the endoplasmic reticulum. It localises to the membrane. Required for sterol biosynthesis. Functions as a positive regulator of cytochrome P450 enzymes erg5 and erg11. Function requires bound heme. The protein is Cytochrome P450 regulator dap1 (dap1) of Schizosaccharomyces pombe (strain 972 / ATCC 24843) (Fission yeast).